A 148-amino-acid polypeptide reads, in one-letter code: Large ribosomal subunit protein uL15 (148 aa).

The tract at residues 1-61 is disordered; sequence MELNELRPAV…GGQMPMQRRL (61 aa). Basic residues predominate over residues 30–39; it reads TATKGHKGQK.

Belongs to the universal ribosomal protein uL15 family. As to quaternary structure, part of the 50S ribosomal subunit.

Its function is as follows. Binds to the 23S rRNA. This is Large ribosomal subunit protein uL15 from Geobacter sulfurreducens (strain ATCC 51573 / DSM 12127 / PCA).